The chain runs to 259 residues: Proliferating cell nuclear antigen (259 aa).

The DNA-binding element occupies 61-80 (RCDRNIALGVNLTSLTKVLR). K164 participates in a covalent cross-link: Glycyl lysine isopeptide (Lys-Gly) (interchain with G-Cter in SUMO); alternate. Residue K164 forms a Glycyl lysine isopeptide (Lys-Gly) (interchain with G-Cter in ubiquitin); alternate linkage.

The protein belongs to the PCNA family. Homotrimer. In terms of processing, monoubiquitinated on Lys-164 upon DNA damage, and then polyubiquitinated through 'Lys-63'-linkage.

The protein resides in the nucleus. In terms of biological role, this protein is an auxiliary protein of DNA polymerase delta and is involved in the control of eukaryotic DNA replication by increasing the polymerase's processibility during elongation of the leading strand. Involved in DNA repair. The protein is Proliferating cell nuclear antigen of Chaetomium thermophilum (strain DSM 1495 / CBS 144.50 / IMI 039719) (Thermochaetoides thermophila).